Consider the following 92-residue polypeptide: Small ribosomal subunit protein bS20 (92 aa).

Belongs to the bacterial ribosomal protein bS20 family.

Functionally, binds directly to 16S ribosomal RNA. The polypeptide is Small ribosomal subunit protein bS20 (Persephonella marina (strain DSM 14350 / EX-H1)).